The sequence spans 445 residues: Proline--tRNA ligase (445 aa).

It belongs to the class-II aminoacyl-tRNA synthetase family. ProS type 2 subfamily. Homodimer.

Its subcellular location is the cytoplasm. It carries out the reaction tRNA(Pro) + L-proline + ATP = L-prolyl-tRNA(Pro) + AMP + diphosphate. Its function is as follows. Catalyzes the attachment of proline to tRNA(Pro) in a two-step reaction: proline is first activated by ATP to form Pro-AMP and then transferred to the acceptor end of tRNA(Pro). In Cereibacter sphaeroides (strain ATCC 17023 / DSM 158 / JCM 6121 / CCUG 31486 / LMG 2827 / NBRC 12203 / NCIMB 8253 / ATH 2.4.1.) (Rhodobacter sphaeroides), this protein is Proline--tRNA ligase.